The primary structure comprises 279 residues: Release factor glutamine methyltransferase (279 aa).

Residues D139 and N182 each contribute to the S-adenosyl-L-methionine site. A substrate-binding site is contributed by 182–185; that stretch reads NPPY.

Belongs to the protein N5-glutamine methyltransferase family. PrmC subfamily.

It carries out the reaction L-glutaminyl-[peptide chain release factor] + S-adenosyl-L-methionine = N(5)-methyl-L-glutaminyl-[peptide chain release factor] + S-adenosyl-L-homocysteine + H(+). Its function is as follows. Methylates the class 1 translation termination release factors RF1/PrfA and RF2/PrfB on the glutamine residue of the universally conserved GGQ motif. This chain is Release factor glutamine methyltransferase, found in Thermodesulfovibrio yellowstonii (strain ATCC 51303 / DSM 11347 / YP87).